Consider the following 251-residue polypeptide: Protein FAM216A (251 aa).

The span at 1 to 16 shows a compositional bias: polar residues; sequence MPNQGPVSDWTECSSS. The interval 1–49 is disordered; it reads MPNQGPVSDWTECSSSAEPPAVARAEGGGGGSAGHSYYQNSKDRIKDGH.

This sequence belongs to the FAM216 family.

In Bos taurus (Bovine), this protein is Protein FAM216A (FAM216A).